We begin with the raw amino-acid sequence, 999 residues long: Sarcoplasmic/endoplasmic reticulum calcium ATPase 3 (999 aa).

Met1 is modified (N-acetylmethionine). Topologically, residues 1 to 48 (MEAAHLLPAADVLRHFSVTAEGGLSPAQVTGARERYGPNELPSEEGKS) are cytoplasmic. Residue Ser17 is modified to Phosphoserine. Thr19 is subject to Phosphothreonine. Position 25 is a phosphoserine (Ser25). The chain crosses the membrane as a helical span at residues 49-69 (LWELVLEQFEDLLVRILLLAA). Topologically, residues 70–89 (LVSFVLAWFEEGEETTTAFV) are lumenal. The chain crosses the membrane as a helical span at residues 90–110 (EPLVIMLILVANAIVGVWQER). The Cytoplasmic portion of the chain corresponds to 111–253 (NAESAIEALK…PERTPLQRKL (143 aa)). Residues 254–273 (DEFGRQLSHAISVICVAVWV) traverse the membrane as a helical segment. The Lumenal segment spans residues 274–295 (INIGHFADPAHGGSWLRGAVYY). Residues 296-313 (FKIAVALAVAAIPEGLPA) form a helical membrane-spanning segment. Residues Val304, Ala305, Ile307, and Glu309 each contribute to the Ca(2+) site. At 314–757 (VITTCLALGT…EEGRAIYSNM (444 aa)) the chain is on the cytoplasmic side. Asp351 acts as the 4-aspartylphosphate intermediate in catalysis. 2 residues coordinate Mg(2+): Asp351 and Thr353. Thr353 contacts ATP. An interaction with phospholamban 1 region spans residues 370–400 (AEADAGSCLLHEFTISGTTYTPEGEVRQGDQ). Residue Thr415 is modified to Phosphothreonine. Residues Glu442, Arg489, Lys515, Arg560, Thr625, Gly626, and Asp627 each contribute to the ATP site. Ser662 is modified (phosphoserine). The ATP site is built by Arg678 and Lys684. Asp703 lines the Mg(2+) pocket. Asn706 contributes to the ATP binding site. Residues 758-777 (KQFIRYLISSNVGEVVCIFL) form a helical membrane-spanning segment. Ca(2+) is bound by residues Asn768 and Glu771. Residues 778 to 787 (TAILGLPEAL) are Lumenal-facing. Residues 788–808 (IPVQLLWVNLVTDGLPATALG) traverse the membrane as a helical segment. An interaction with phospholamban 2 region spans residues 788 to 808 (IPVQLLWVNLVTDGLPATALG). Asn796, Thr799, and Asp800 together coordinate Ca(2+). The Cytoplasmic segment spans residues 809-828 (FNPPDLDIMEKLPRSPREAL). Residues 829–851 (ISGWLFFRYLAIGVYVGLATVAA) form a helical membrane-spanning segment. The Lumenal portion of the chain corresponds to 852–897 (ATWWFVYDAEGPHINFYQLRNFLKCSEDNPLFAGIDCEVFESRFPT). The chain crosses the membrane as a helical span at residues 898–917 (TMALSVLVTIEMCNALNSVS). Glu908 serves as a coordination point for Ca(2+). Topologically, residues 918–930 (ENQSLLRMPPWMN) are cytoplasmic. A helical transmembrane segment spans residues 931-949 (PWLLVAVAMSMALHFLILL). Residues 950-964 (VPPLPLIFQVTPLSG) are Lumenal-facing. A helical transmembrane segment spans residues 965–985 (RQWVVVLQISLPVILLDEALK). Residues 986-999 (YLSRNHMHEEMSQK) are Cytoplasmic-facing.

The protein belongs to the cation transport ATPase (P-type) (TC 3.A.3) family. Type IIA subfamily. Interacts with sarcolipin (SLN). Interacts with phospholamban (PLN). Interacts with myoregulin (MRLN). Interacts with DWORF. Interacts with VMP1. Interacts with TUNAR; the interaction occurs at low levels in low glucose conditions and is increased by high glucose levels. The cofactor is Mg(2+). As to expression, found in most tissues. Most abundant in thymus, trachea, salivary gland, spleen, bone marrow, lymph node, peripheral leukocytes, pancreas and colon. Also detected in fetal tissues. Expressed in cell lineages of hematopoietic, epithelial, or embryonic origin and also expressed in several cancer cell lines.

The protein localises to the nucleus membrane. It is found in the endoplasmic reticulum membrane. The protein resides in the sarcoplasmic reticulum membrane. The enzyme catalyses Ca(2+)(in) + ATP + H2O = Ca(2+)(out) + ADP + phosphate + H(+). Its activity is regulated as follows. Inhibited by sarcolipin (SLN), phospholamban (PLN) and myoregulin (MRLN). Enhanced by DWORF; DWORF increases activity by displacing sarcolipin (SLN), phospholamban (PLN) and myoregulin (MRLN). In terms of biological role, this magnesium-dependent enzyme catalyzes the hydrolysis of ATP coupled with the transport of calcium. Transports calcium ions from the cytosol into the sarcoplasmic/endoplasmic reticulum lumen. Contributes to calcium sequestration involved in muscular excitation/contraction. This Homo sapiens (Human) protein is Sarcoplasmic/endoplasmic reticulum calcium ATPase 3.